The chain runs to 277 residues: 4-hydroxy-tetrahydrodipicolinate reductase (277 aa).

NAD(+)-binding positions include 11 to 16 (GALGRM) and 110 to 112 (GTT). His-166 functions as the Proton donor/acceptor in the catalytic mechanism. His-167 contacts (S)-2,3,4,5-tetrahydrodipicolinate. Lys-170 (proton donor) is an active-site residue. Position 176-177 (176-177 (GT)) interacts with (S)-2,3,4,5-tetrahydrodipicolinate.

This sequence belongs to the DapB family.

It localises to the cytoplasm. The enzyme catalyses (S)-2,3,4,5-tetrahydrodipicolinate + NAD(+) + H2O = (2S,4S)-4-hydroxy-2,3,4,5-tetrahydrodipicolinate + NADH + H(+). It carries out the reaction (S)-2,3,4,5-tetrahydrodipicolinate + NADP(+) + H2O = (2S,4S)-4-hydroxy-2,3,4,5-tetrahydrodipicolinate + NADPH + H(+). It participates in amino-acid biosynthesis; L-lysine biosynthesis via DAP pathway; (S)-tetrahydrodipicolinate from L-aspartate: step 4/4. Catalyzes the conversion of 4-hydroxy-tetrahydrodipicolinate (HTPA) to tetrahydrodipicolinate. This is 4-hydroxy-tetrahydrodipicolinate reductase from Parasynechococcus marenigrum (strain WH8102).